The chain runs to 209 residues: Inducible T-cell costimulator (209 aa).

An N-terminal signal peptide occupies residues 1–19 (MKSDLRYFFLFCIQVEILA). Over 20–141 (GEFNDSAASE…YESELCCQLK (122 aa)) the chain is Extracellular. Asparagine 23 carries an N-linked (GlcNAc...) asparagine glycan. The 104-residue stretch at 30-133 (MFIFHNGGVQ…LSREYLNIYE (104 aa)) folds into the Ig-like V-type domain. 2 cysteine pairs are disulfide-bonded: cysteine 42/cysteine 109 and cysteine 63/cysteine 83. N-linked (GlcNAc...) asparagine glycosylation is present at asparagine 89. The helical transmembrane segment at 142 to 162 (FWLPIGCAAFVTVCVFGCVLM) threads the bilayer.

As to quaternary structure, homodimer; disulfide-linked. Interacts with ICOSLG. Interacts with PIK3R1. Interacts with TBK1; this interaction is critical for the maturation of T follicular regulatory cells. In terms of processing, N-glycosylated.

The protein resides in the cell membrane. Stimulatory receptor expressed in activated or antigen-experienced T-cells that plays an important role in the immune response. Upon binding to its ligand ICOSL expressed on antigen presenting cells (APCs), delivers costimulatory signals that enhances all basic T-cell responses to a foreign antigen, namely proliferation, secretion of lymphokines including IL10, up-regulation of molecules that mediate cell-cell interaction, and effective help for antibody secretion by B-cells. Also acts as a costimulatory receptor critical for the differentiation of T follicular regulatory cells upon immune challenges such as viral infection. Mechanistically, potentiates TCR-induced calcium flux by augmenting PLCG1 activation and actin remodeling. In addition, activates PI3K signaling pathways independently of calcium flux. Essential both for efficient interaction between T and B-cells and for normal antibody responses to T-cell dependent antigens. Prevents the apoptosis of pre-activated T-cells. Plays a critical role in CD40-mediated class switching of immunoglobin isotypes. The polypeptide is Inducible T-cell costimulator (ICOS) (Bos taurus (Bovine)).